The chain runs to 505 residues: uncharacterized protein (505 aa).

The active-site Proton acceptor is the histidine 431.

Belongs to the GMC oxidoreductase family. The cofactor is FAD.

This is an uncharacterized protein from Sinorhizobium fredii (strain NBRC 101917 / NGR234).